The following is a 379-amino-acid chain: Queuine tRNA-ribosyltransferase (379 aa).

The active-site Proton acceptor is the Asp94. Substrate is bound by residues 94-98, Asp148, Gln191, and Gly218; that span reads DSGGF. Residues 249 to 255 are RNA binding; the sequence is GVGSPDS. Asp268 (nucleophile) is an active-site residue. Residues 273 to 277 form an RNA binding; important for wobble base 34 recognition region; it reads TRIAR. Zn(2+) contacts are provided by Cys306, Cys308, Cys311, and His337.

This sequence belongs to the queuine tRNA-ribosyltransferase family. In terms of assembly, homodimer. Within each dimer, one monomer is responsible for RNA recognition and catalysis, while the other monomer binds to the replacement base PreQ1. It depends on Zn(2+) as a cofactor.

The enzyme catalyses 7-aminomethyl-7-carbaguanine + guanosine(34) in tRNA = 7-aminomethyl-7-carbaguanosine(34) in tRNA + guanine. The protein operates within tRNA modification; tRNA-queuosine biosynthesis. Functionally, catalyzes the base-exchange of a guanine (G) residue with the queuine precursor 7-aminomethyl-7-deazaguanine (PreQ1) at position 34 (anticodon wobble position) in tRNAs with GU(N) anticodons (tRNA-Asp, -Asn, -His and -Tyr). Catalysis occurs through a double-displacement mechanism. The nucleophile active site attacks the C1' of nucleotide 34 to detach the guanine base from the RNA, forming a covalent enzyme-RNA intermediate. The proton acceptor active site deprotonates the incoming PreQ1, allowing a nucleophilic attack on the C1' of the ribose to form the product. After dissociation, two additional enzymatic reactions on the tRNA convert PreQ1 to queuine (Q), resulting in the hypermodified nucleoside queuosine (7-(((4,5-cis-dihydroxy-2-cyclopenten-1-yl)amino)methyl)-7-deazaguanosine). The sequence is that of Queuine tRNA-ribosyltransferase from Halalkalibacterium halodurans (strain ATCC BAA-125 / DSM 18197 / FERM 7344 / JCM 9153 / C-125) (Bacillus halodurans).